Here is a 204-residue protein sequence, read N- to C-terminus: LexA repressor (204 aa).

The H-T-H motif DNA-binding region spans 27–47; that stretch reads VREIGEAVGLASSSTVHGHLA. Active-site for autocatalytic cleavage activity residues include S126 and K164.

Belongs to the peptidase S24 family. As to quaternary structure, homodimer.

The enzyme catalyses Hydrolysis of Ala-|-Gly bond in repressor LexA.. Represses a number of genes involved in the response to DNA damage (SOS response), including recA and lexA. In the presence of single-stranded DNA, RecA interacts with LexA causing an autocatalytic cleavage which disrupts the DNA-binding part of LexA, leading to derepression of the SOS regulon and eventually DNA repair. In Listeria monocytogenes serotype 4b (strain CLIP80459), this protein is LexA repressor.